Reading from the N-terminus, the 156-residue chain is SsrA-binding protein (156 aa).

The interval H135–R156 is disordered.

It belongs to the SmpB family.

It localises to the cytoplasm. Required for rescue of stalled ribosomes mediated by trans-translation. Binds to transfer-messenger RNA (tmRNA), required for stable association of tmRNA with ribosomes. tmRNA and SmpB together mimic tRNA shape, replacing the anticodon stem-loop with SmpB. tmRNA is encoded by the ssrA gene; the 2 termini fold to resemble tRNA(Ala) and it encodes a 'tag peptide', a short internal open reading frame. During trans-translation Ala-aminoacylated tmRNA acts like a tRNA, entering the A-site of stalled ribosomes, displacing the stalled mRNA. The ribosome then switches to translate the ORF on the tmRNA; the nascent peptide is terminated with the 'tag peptide' encoded by the tmRNA and targeted for degradation. The ribosome is freed to recommence translation, which seems to be the essential function of trans-translation. The polypeptide is SsrA-binding protein (Kineococcus radiotolerans (strain ATCC BAA-149 / DSM 14245 / SRS30216)).